The following is a 949-amino-acid chain: Serine/threonine-protein kinase KIPK2 (949 aa).

Disordered regions lie at residues 79-116 (LETS…VGPS), 323-344 (TALS…TEKS), 407-426 (STST…DKNV), and 495-525 (SSEK…SNLS). Over residues 81–94 (TSASAGTSRSTSPS) the composition is skewed to low complexity. 2 stretches are compositionally biased toward polar residues: residues 407–420 (STST…NTSH) and 495–512 (SSEK…LGDY). The span at 513–525 (SSSTSMSEESNLS) shows a compositional bias: low complexity. The region spanning 559–898 (FNLLKKLGCG…AAEIKRHPFF (340 aa)) is the Protein kinase domain. ATP contacts are provided by residues 565-573 (LGCGDIGTV) and Lys588. Asp684 functions as the Proton acceptor in the catalytic mechanism.

Belongs to the protein kinase superfamily. Ser/Thr protein kinase family. Interacts with KCBP, PERK8, PERK9, PERK10 and PERK13.

The enzyme catalyses L-seryl-[protein] + ATP = O-phospho-L-seryl-[protein] + ADP + H(+). It carries out the reaction L-threonyl-[protein] + ATP = O-phospho-L-threonyl-[protein] + ADP + H(+). Its function is as follows. Serine/threonine-protein kinase that could be involved in the negative regulation of root growth. This Arabidopsis thaliana (Mouse-ear cress) protein is Serine/threonine-protein kinase KIPK2.